We begin with the raw amino-acid sequence, 116 residues long: Large ribosomal subunit protein bL19 (116 aa).

It belongs to the bacterial ribosomal protein bL19 family.

Its function is as follows. This protein is located at the 30S-50S ribosomal subunit interface and may play a role in the structure and function of the aminoacyl-tRNA binding site. This is Large ribosomal subunit protein bL19 from Pseudomonas putida (strain ATCC 700007 / DSM 6899 / JCM 31910 / BCRC 17059 / LMG 24140 / F1).